Reading from the N-terminus, the 638-residue chain is Probable beta-glucosidase C (638 aa).

The first 18 residues, 1–18, serve as a signal peptide directing secretion; sequence MKVLAPGYLAEASLTALA. N-linked (GlcNAc...) asparagine glycans are attached at residues Asn40, Asn94, Asn116, Asn223, and Asn274. The active site involves Asp341. 4 N-linked (GlcNAc...) asparagine glycosylation sites follow: Asn364, Asn480, Asn488, and Asn528.

Belongs to the glycosyl hydrolase 3 family.

The protein resides in the secreted. The enzyme catalyses Hydrolysis of terminal, non-reducing beta-D-glucosyl residues with release of beta-D-glucose.. It functions in the pathway glycan metabolism; cellulose degradation. Beta-glucosidases are one of a number of cellulolytic enzymes involved in the degradation of cellulosic biomass. Catalyzes the last step releasing glucose from the inhibitory cellobiose. This chain is Probable beta-glucosidase C (bglC), found in Aspergillus oryzae (strain ATCC 42149 / RIB 40) (Yellow koji mold).